The sequence spans 347 residues: NADH-ubiquinone oxidoreductase chain 2 (347 aa).

The next 10 membrane-spanning stretches (helical) occupy residues 1 to 21 (MNPL…TIVM), 25 to 45 (HWLV…PVLM), 59 to 79 (YFLT…INLI), 96 to 116 (IIMT…FWVP), 122 to 142 (IQLS…ISIL), 150 to 170 (NLNL…WGGL), 201 to 221 (ALLN…VFML), 242 to 262 (TALL…GFLP), 274 to 294 (NSVI…YFYM), and 326 to 346 (LSPL…LTLL).

The protein belongs to the complex I subunit 2 family. In terms of assembly, core subunit of respiratory chain NADH dehydrogenase (Complex I) which is composed of 45 different subunits. Interacts with TMEM242.

It is found in the mitochondrion inner membrane. The catalysed reaction is a ubiquinone + NADH + 5 H(+)(in) = a ubiquinol + NAD(+) + 4 H(+)(out). Functionally, core subunit of the mitochondrial membrane respiratory chain NADH dehydrogenase (Complex I) which catalyzes electron transfer from NADH through the respiratory chain, using ubiquinone as an electron acceptor. Essential for the catalytic activity and assembly of complex I. In Eidolon helvum (Straw-colored fruit bat), this protein is NADH-ubiquinone oxidoreductase chain 2.